The sequence spans 71 residues: Small ribosomal subunit protein bS21 (71 aa).

Belongs to the bacterial ribosomal protein bS21 family.

This Shewanella sediminis (strain HAW-EB3) protein is Small ribosomal subunit protein bS21.